Reading from the N-terminus, the 247-residue chain is Agamous-like MADS-box protein FUL-L (247 aa).

The 61-residue stretch at 1 to 61 folds into the MADS-box domain; sequence MGRGRVQLKR…GKLFEYSSDS (61 aa). The region spanning 88–178 is the K-box domain; the sequence is QGNWSMDYPK…AKKVKEKEKV (91 aa). Residues 224-247 are disordered; it reads EDGAEARPSPNTLMPPWMLRHVNE.

As to expression, expressed in tendrils and flowers.

The protein resides in the nucleus. Its function is as follows. Probable transcription factor involved in flower development. This is Agamous-like MADS-box protein FUL-L from Vitis vinifera (Grape).